The sequence spans 779 residues: Putative helicase V13 (779 aa).

Residues 477–642 form the SF3 helicase domain; it reads DNPKPFITSL…FVKEEELNEK (166 aa). 504–511 serves as a coordination point for ATP; the sequence is GKSNAGKS.

The protein is Putative helicase V13 of Acanthamoeba polyphaga (Amoeba).